The sequence spans 614 residues: Vitamin B12 transporter BtuB (614 aa).

A signal peptide spans 1–20 (MIKKASLLTACSVTAFSAWA). The TonB box signature appears at 26 to 33 (DTLVVTAN). One can recognise a TBDR plug domain in the interval 38-152 (PRSTVLAPTT…IGGVVNIITT (115 aa)). Cyanocob(III)alamin-binding positions include Leu83, Ser85, Asn92, and 110–111 (VS). The 460-residue stretch at 155–614 (EPGTEISAGW…EYTLSGSYTF (460 aa)) folds into the TBDR beta-barrel domain. Transmembrane regions (beta stranded) follow at residues 158–165 (TEISAGWG), 169–178 (YQNYDVSTQQ), and 184–195 (TRVTLLGDYAHT). Ca(2+) contacts are provided by Asp199, Gln211, Asp213, and Asp215. The next 2 membrane-spanning stretches (beta stranded) occupy residues 217–227 (FLSKTLYGALE) and 232–248 (DAWS…NRTN). Residues Tyr249 and Asp250 each coordinate Ca(2+). Position 251 (Ala251) interacts with cyanocob(III)alamin. Asp261 lines the Ca(2+) pocket. Transmembrane regions (beta stranded) follow at residues 263-277 (RKLY…LRYN), 279-296 (ELIK…KDYN), 309-325 (TLDE…NNVI), 328-337 (HGSIGAGVDW), 353-369 (YDQR…QQVG), 371-381 (FTFEGAARSDD), 385-400 (FGRH…WEFI), 403-417 (YRFI…KAPN), 434-443 (KSKQWEGAFE), 449-458 (VNWRISGYRN), 473-490 (YYNE…TANF), 494-509 (PLTH…ARNA), 517-529 (RRAK…QLDW), and 535-550 (DWGI…YDKD). Cyanocob(III)alamin is bound at residue Thr309. Arg517 contacts cyanocob(III)alamin. Residue Tyr551 coordinates cyanocob(III)alamin. Transmembrane regions (beta stranded) follow at residues 558–572 (TVKM…LAVA), 585–596 (IANLFDKDYETV), and 602–614 (AGRE…SYTF). The TonB C-terminal box motif lies at 597–614 (YGYQTAGREYTLSGSYTF).

Belongs to the TonB-dependent receptor family. BtuB (TC 1.B.14.3.1) subfamily.

The protein localises to the cell outer membrane. Functionally, involved in the active translocation of vitamin B12 (cyanocobalamin) across the outer membrane to the periplasmic space. It derives its energy for transport by interacting with the trans-periplasmic membrane protein TonB. This is Vitamin B12 transporter BtuB from Escherichia coli O9:H4 (strain HS).